A 711-amino-acid chain; its full sequence is Ribosomal RNA large subunit methyltransferase K/L (711 aa).

The THUMP domain occupies 42 to 153 (DAQRAVLWSR…KGRATISVDL (112 aa)).

The protein belongs to the methyltransferase superfamily. RlmKL family.

The protein resides in the cytoplasm. The catalysed reaction is guanosine(2445) in 23S rRNA + S-adenosyl-L-methionine = N(2)-methylguanosine(2445) in 23S rRNA + S-adenosyl-L-homocysteine + H(+). The enzyme catalyses guanosine(2069) in 23S rRNA + S-adenosyl-L-methionine = N(2)-methylguanosine(2069) in 23S rRNA + S-adenosyl-L-homocysteine + H(+). Its function is as follows. Specifically methylates the guanine in position 2445 (m2G2445) and the guanine in position 2069 (m7G2069) of 23S rRNA. The polypeptide is Ribosomal RNA large subunit methyltransferase K/L (Xanthomonas oryzae pv. oryzae (strain MAFF 311018)).